The chain runs to 122 residues: Large ribosomal subunit protein uL14c (122 aa).

This sequence belongs to the universal ribosomal protein uL14 family. As to quaternary structure, part of the 50S ribosomal subunit.

The protein resides in the plastid. The protein localises to the chloroplast. Functionally, binds to 23S rRNA. The protein is Large ribosomal subunit protein uL14c of Daucus carota (Wild carrot).